The following is a 335-amino-acid chain: Nucleoid-associated protein YejK (335 aa).

This sequence belongs to the YejK family.

Its subcellular location is the cytoplasm. It is found in the nucleoid. In Shigella dysenteriae serotype 1 (strain Sd197), this protein is Nucleoid-associated protein YejK.